We begin with the raw amino-acid sequence, 418 residues long: Gamma-glutamyl phosphate reductase (418 aa).

Belongs to the gamma-glutamyl phosphate reductase family.

It is found in the cytoplasm. It catalyses the reaction L-glutamate 5-semialdehyde + phosphate + NADP(+) = L-glutamyl 5-phosphate + NADPH + H(+). Its pathway is amino-acid biosynthesis; L-proline biosynthesis; L-glutamate 5-semialdehyde from L-glutamate: step 2/2. Catalyzes the NADPH-dependent reduction of L-glutamate 5-phosphate into L-glutamate 5-semialdehyde and phosphate. The product spontaneously undergoes cyclization to form 1-pyrroline-5-carboxylate. The polypeptide is Gamma-glutamyl phosphate reductase (Geotalea daltonii (strain DSM 22248 / JCM 15807 / FRC-32) (Geobacter daltonii)).